The sequence spans 473 residues: Mitochondrial adenyl nucleotide antiporter SLC25A24-A (473 aa).

Positions Met1–Asp173 are regulatory N-terminal domain. Over Met1–His197 the chain is Mitochondrial intermembrane. EF-hand domains follow at residues Asp19 to Ala54, Val55 to Glu88, Glu86 to Asn121, and Ile122 to Asp157. Residues Asp32, Asn34, Asp36, Lys38, Glu43, Asp68, Asn70, Asp72, His74, Glu79, Asp99, Asn101, Asp103, Lys105, Glu110, Asp135, Asp137, Thr139, Thr141, and Glu146 each contribute to the Ca(2+) site. The tract at residues Ile159–His168 is linker region. The segment at Ile174–Ile473 is C-terminal transmembrane transporter domain. Solcar repeat units follow at residues Gly192–Leu277, Leu285–Tyr370, and Pro382–Gln470. Residues Leu198–Leu215 form a helical membrane-spanning segment. At Asp216–Arg251 the chain is on the mitochondrial matrix side. The chain crosses the membrane as a helical span at residues Gly252–Tyr271. Residues Glu272 to Gly294 are Mitochondrial intermembrane-facing. Residues Ser295–Met308 form a helical membrane-spanning segment. The Mitochondrial matrix segment spans residues Glu309–Lys344. The chain crosses the membrane as a helical span at residues Gly345–Tyr364. At Glu365–Leu387 the chain is on the mitochondrial intermembrane side. Residues Leu388–Leu405 traverse the membrane as a helical segment. The Mitochondrial matrix portion of the chain corresponds to Ala406–Thr444. The helical transmembrane segment at Gly445 to Tyr464 threads the bilayer. The Mitochondrial intermembrane segment spans residues Glu465 to Ile473.

This sequence belongs to the mitochondrial carrier (TC 2.A.29) family. In terms of assembly, monomer.

Its subcellular location is the mitochondrion inner membrane. The enzyme catalyses Mg(2+)(out) + phosphate(in) + ATP(out) = Mg(2+)(in) + phosphate(out) + ATP(in). The catalysed reaction is ADP(out) + phosphate(in) + H(+)(out) = ADP(in) + phosphate(out) + H(+)(in). It catalyses the reaction AMP(out) + phosphate(in) = AMP(in) + phosphate(out). It carries out the reaction phosphate(in) + ATP(out) + 2 H(+)(out) = phosphate(out) + ATP(in) + 2 H(+)(in). The enzyme catalyses dADP(in) + ADP(out) = dADP(out) + ADP(in). The catalysed reaction is Mg(2+)(in) + ADP(out) + ATP(in) + H(+)(out) = Mg(2+)(out) + ADP(in) + ATP(out) + H(+)(in). It catalyses the reaction ADP(out) + diphosphate(in) = ADP(in) + diphosphate(out). It carries out the reaction dAMP(in) + ADP(out) + H(+)(out) = dAMP(out) + ADP(in) + H(+)(in). The enzyme catalyses 3'-AMP(in) + ADP(out) + H(+)(out) = 3'-AMP(out) + ADP(in) + H(+)(in). The catalysed reaction is dAMP(out) + phosphate(in) = dAMP(in) + phosphate(out). It catalyses the reaction 3'-AMP(out) + phosphate(in) = 3'-AMP(in) + phosphate(out). It carries out the reaction dADP(out) + phosphate(in) + H(+)(out) = dADP(in) + phosphate(out) + H(+)(in). Its activity is regulated as follows. Activated by an increase in cytosolic calcium levels that induce a conformational change of the N-terminal regulatory domain, uncapping the channel and allowing transport. Inhibited by bathophenanthroline, mersalyl, p-hydroxymercuribenzoate, bromcresol purple and tannic acid. Its function is as follows. Electroneutral antiporter that mediates the transport of adenyl nucleotides through the inner mitochondrial membrane. Originally identified as an ATP-magnesium/inorganic phosphate antiporter, it also acts as a broad specificity adenyl nucleotide antiporter. By regulating the mitochondrial matrix adenyl nucleotide pool could adapt to changing cellular energetic demands and indirectly regulate adenyl nucleotide-dependent metabolic pathways. The sequence is that of Mitochondrial adenyl nucleotide antiporter SLC25A24-A (slc25a24-a) from Xenopus laevis (African clawed frog).